A 184-amino-acid chain; its full sequence is Photosystem I assembly protein Ycf4 (184 aa).

Transmembrane regions (helical) follow at residues 22-42 and 57-77; these read FFWACILFLGSLGFLVVGTSS and ISFFPQGIVMSFYGIAGLFIS.

It belongs to the Ycf4 family.

The protein localises to the plastid. The protein resides in the chloroplast thylakoid membrane. Seems to be required for the assembly of the photosystem I complex. This Lemna minor (Common duckweed) protein is Photosystem I assembly protein Ycf4.